Reading from the N-terminus, the 1369-residue chain is Mediator of RNA polymerase II transcription subunit 23 (1369 aa).

The interval 1337-1369 is disordered; sequence TESAAPPPPPMNSGSPAPQPNQVPVSVPLTVTQ. Residues 1341–1357 show a composition bias toward pro residues; sequence APPPPPMNSGSPAPQPN.

Belongs to the Mediator complex subunit 23 family. Component of the Mediator complex.

It localises to the nucleus. Functionally, component of the Mediator complex, a coactivator involved in the regulated transcription of nearly all RNA polymerase II-dependent genes. Mediator functions as a bridge to convey information from gene-specific regulatory proteins to the basal RNA polymerase II transcription machinery. Mediator is recruited to promoters by direct interactions with regulatory proteins and serves as a scaffold for the assembly of a functional preinitiation complex with RNA polymerase II and the general transcription factors. This is Mediator of RNA polymerase II transcription subunit 23 (med23) from Xenopus laevis (African clawed frog).